Reading from the N-terminus, the 274-residue chain is Large ribosomal subunit protein uL2 (274 aa).

Disordered stretches follow at residues 35 to 55 (FGKK…RHRG) and 224 to 274 (AMNP…KLKG). Basic residues predominate over residues 45–55 (NHGRITTRHRG). Over residues 263–274 (KSSDKYIKKLKG) the composition is skewed to basic and acidic residues.

Belongs to the universal ribosomal protein uL2 family. In terms of assembly, part of the 50S ribosomal subunit. Forms a bridge to the 30S subunit in the 70S ribosome.

Functionally, one of the primary rRNA binding proteins. Required for association of the 30S and 50S subunits to form the 70S ribosome, for tRNA binding and peptide bond formation. It has been suggested to have peptidyltransferase activity; this is somewhat controversial. Makes several contacts with the 16S rRNA in the 70S ribosome. In Wolbachia pipientis subsp. Culex pipiens (strain wPip), this protein is Large ribosomal subunit protein uL2.